The following is a 792-amino-acid chain: Phenylalanine--tRNA ligase beta subunit (792 aa).

Residues 39–147 enclose the tRNA-binding domain; that stretch reads GEALDLILVA…EDAPIGTPLA (109 aa). The B5 domain occupies 400-475; it reads PAPASILLRR…RIRGYEHLPT (76 aa). Mg(2+) is bound by residues Asp-453, Asp-459, Glu-462, and Glu-463. Residues 698-791 enclose the FDX-ACB domain; sequence SRFPFVRRDL…IQQRHDVRIR (94 aa).

Belongs to the phenylalanyl-tRNA synthetase beta subunit family. Type 1 subfamily. In terms of assembly, tetramer of two alpha and two beta subunits. Requires Mg(2+) as cofactor.

Its subcellular location is the cytoplasm. The enzyme catalyses tRNA(Phe) + L-phenylalanine + ATP = L-phenylalanyl-tRNA(Phe) + AMP + diphosphate + H(+). The polypeptide is Phenylalanine--tRNA ligase beta subunit (Xylella fastidiosa (strain Temecula1 / ATCC 700964)).